Reading from the N-terminus, the 246-residue chain is MRRGFGPLSLAFFLFLLALLTLPGDGNQGSVAGSCSCDRTISSGTQIPQGTLDHIRKYLKAFHRCPFFIRFQLQSKSVCGGSQDQWVRELVDCFERKECGTGHGKSFHHQKHLPQASTQTPEAAEGTPSDTSTPAHSQSTQHSTLPSGALSLNKEHTQPWEMTTLPSGYGLEARPEAEANEKQQDDRQQEAPGAGASTPAWVPVLSLLAIVFFLTAAMAYVLCNRRATQQNSAGLQLWYTPVEPRP.

Residues 1-26 form the signal peptide; the sequence is MRRGFGPLSLAFFLFLLALLTLPGDG. Over 27 to 201 the chain is Extracellular; it reads NQGSVAGSCS…PGAGASTPAW (175 aa). Intrachain disulfides connect Cys35-Cys65 and Cys37-Cys79. 2 disordered regions span residues 104–150 and 175–198; these read GKSF…SGAL and PEAEANEKQQDDRQQEAPGAGAST. Residues 128–146 show a composition bias toward polar residues; that stretch reads PSDTSTPAHSQSTQHSTLP. Residues 175–189 are compositionally biased toward basic and acidic residues; the sequence is PEAEANEKQQDDRQQ. A helical transmembrane segment spans residues 202–222; it reads VPVLSLLAIVFFLTAAMAYVL. The Cytoplasmic portion of the chain corresponds to 223-246; that stretch reads CNRRATQQNSAGLQLWYTPVEPRP.

Belongs to the intercrine alpha (chemokine CxC) family. In terms of processing, glycosylated. As to expression, widely expressed. Not detected in purified B- and T-cells.

It localises to the membrane. Induces a strong chemotactic response. Induces calcium mobilization. Binds to CXCR6/Bonzo. Also acts as a scavenger receptor on macrophages, which specifically binds to OxLDL (oxidized low density lipoprotein), suggesting that it may be involved in pathophysiology such as atherogenesis. The polypeptide is C-X-C motif chemokine 16 (Cxcl16) (Mus musculus (Mouse)).